The sequence spans 280 residues: uncharacterized protein (280 aa).

The protein to E.coli YgfZ (UP14) and B.aphidicola (subsp. Acyrthosiphon pisum) BU435.

This is an uncharacterized protein from Haemophilus influenzae (strain ATCC 51907 / DSM 11121 / KW20 / Rd).